A 37-amino-acid chain; its full sequence is Cytochrome b6-f complex subunit 5 (37 aa).

The chain crosses the membrane as a helical span at residues 5-25 (LLSGIVPGLIPITLAGSFVIA).

Belongs to the PetG family. As to quaternary structure, the 4 large subunits of the cytochrome b6-f complex are cytochrome b6, subunit IV (17 kDa polypeptide, PetD), cytochrome f and the Rieske protein, while the 4 small subunits are PetG, PetL, PetM and PetN. The complex functions as a dimer.

It localises to the plastid membrane. Component of the cytochrome b6-f complex, which mediates electron transfer between photosystem II (PSII) and photosystem I (PSI), cyclic electron flow around PSI, and state transitions. PetG is required for either the stability or assembly of the cytochrome b6-f complex. The sequence is that of Cytochrome b6-f complex subunit 5 from Aneura mirabilis (Parasitic liverwort).